We begin with the raw amino-acid sequence, 227 residues long: Cytochrome c oxidase subunit 2 (227 aa).

Residues 1-14 are Mitochondrial intermembrane-facing; sequence MAYPFQLGLQDATS. Residues 15-45 traverse the membrane as a helical segment; sequence PIMEELTNFHDHTLMIVFLISSLVLYIISLM. Residues 46 to 59 are Mitochondrial matrix-facing; it reads LTTKLTHTSTMDAQ. The chain crosses the membrane as a helical span at residues 60-87; sequence EVETIWTILPAAILVLIALPSLRILYMM. At 88–227 the chain is on the mitochondrial intermembrane side; sequence DEINNPVLTV…HFENWSASMV (140 aa). Cu cation-binding residues include His-161, Cys-196, Glu-198, Cys-200, His-204, and Met-207. Residue Glu-198 participates in Mg(2+) binding.

It belongs to the cytochrome c oxidase subunit 2 family. Component of the cytochrome c oxidase (complex IV, CIV), a multisubunit enzyme composed of 14 subunits. The complex is composed of a catalytic core of 3 subunits MT-CO1, MT-CO2 and MT-CO3, encoded in the mitochondrial DNA, and 11 supernumerary subunits COX4I, COX5A, COX5B, COX6A, COX6B, COX6C, COX7A, COX7B, COX7C, COX8 and NDUFA4, which are encoded in the nuclear genome. The complex exists as a monomer or a dimer and forms supercomplexes (SCs) in the inner mitochondrial membrane with NADH-ubiquinone oxidoreductase (complex I, CI) and ubiquinol-cytochrome c oxidoreductase (cytochrome b-c1 complex, complex III, CIII), resulting in different assemblies (supercomplex SCI(1)III(2)IV(1) and megacomplex MCI(2)III(2)IV(2)). Found in a complex with TMEM177, COA6, COX18, COX20, SCO1 and SCO2. Interacts with TMEM177 in a COX20-dependent manner. Interacts with COX20. Interacts with COX16. Cu cation serves as cofactor.

The protein localises to the mitochondrion inner membrane. The enzyme catalyses 4 Fe(II)-[cytochrome c] + O2 + 8 H(+)(in) = 4 Fe(III)-[cytochrome c] + 2 H2O + 4 H(+)(out). Functionally, component of the cytochrome c oxidase, the last enzyme in the mitochondrial electron transport chain which drives oxidative phosphorylation. The respiratory chain contains 3 multisubunit complexes succinate dehydrogenase (complex II, CII), ubiquinol-cytochrome c oxidoreductase (cytochrome b-c1 complex, complex III, CIII) and cytochrome c oxidase (complex IV, CIV), that cooperate to transfer electrons derived from NADH and succinate to molecular oxygen, creating an electrochemical gradient over the inner membrane that drives transmembrane transport and the ATP synthase. Cytochrome c oxidase is the component of the respiratory chain that catalyzes the reduction of oxygen to water. Electrons originating from reduced cytochrome c in the intermembrane space (IMS) are transferred via the dinuclear copper A center (CU(A)) of subunit 2 and heme A of subunit 1 to the active site in subunit 1, a binuclear center (BNC) formed by heme A3 and copper B (CU(B)). The BNC reduces molecular oxygen to 2 water molecules using 4 electrons from cytochrome c in the IMS and 4 protons from the mitochondrial matrix. The chain is Cytochrome c oxidase subunit 2 (MT-CO2) from Uromys caudimaculatus (Giant white-tailed rat).